A 380-amino-acid polypeptide reads, in one-letter code: N5-carboxyaminoimidazole ribonucleotide synthase (380 aa).

ATP is bound by residues arginine 108, lysine 148, 153 to 159 (GYDGKGQ), 183 to 186 (ESWV), glutamate 191, histidine 214, and 268 to 269 (NE). In terms of domain architecture, ATP-grasp spans 112 to 298 (KKAIQSAGCE…QFEQHIRAVC (187 aa)).

Belongs to the PurK/PurT family. In terms of assembly, homodimer.

It catalyses the reaction 5-amino-1-(5-phospho-beta-D-ribosyl)imidazole + hydrogencarbonate + ATP = 5-carboxyamino-1-(5-phospho-D-ribosyl)imidazole + ADP + phosphate + 2 H(+). Its pathway is purine metabolism; IMP biosynthesis via de novo pathway; 5-amino-1-(5-phospho-D-ribosyl)imidazole-4-carboxylate from 5-amino-1-(5-phospho-D-ribosyl)imidazole (N5-CAIR route): step 1/2. In terms of biological role, catalyzes the ATP-dependent conversion of 5-aminoimidazole ribonucleotide (AIR) and HCO(3)(-) to N5-carboxyaminoimidazole ribonucleotide (N5-CAIR). This is N5-carboxyaminoimidazole ribonucleotide synthase from Bacillus subtilis (strain 168).